Here is a 93-residue protein sequence, read N- to C-terminus: Defensin alpha 4 (93 aa).

Residues 1–19 form the signal peptide; the sequence is MRTLTLLITLLLLALHTQA. The propeptide occupies 20-62; it reads ESPQERAKAAPDQDMVMEDQDIFISFGGYKGTVLQDAVVKAGQ. 3 disulfide bridges follow: Cys64-Cys92, Cys66-Cys81, and Cys71-Cys91.

Belongs to the alpha-defensin family. Expressed in neutrophils (at protein level). Highest expression in bone marrow and to a much lesser extent in small intestine.

Its subcellular location is the secreted. In terms of biological role, host-defense peptide that has antimicrobial activity against Gram-positive and Gram-negative bacteria and fungi (in vitro). Exhibits activity against E.coli, A.calcoaceticus, S,aureus and C.albicans. This is Defensin alpha 4 from Rattus norvegicus (Rat).